Consider the following 275-residue polypeptide: MSDDTPKFSVLMAIYIKDSPLFLSEALQSIYKNTVAPDEVIIIRDGKVTSELNSVIDSWRRYLNIKDFTLEKNMGLGAALNFGLNQCMHDLVIRADSDDINRTNRFECILDFMTKNGDVHILSSWVEEFEFNPGDKGIIKKVPSRNSILKYSKNRSPFNHPAVAFKKCEIMRVGGYGNEYLYEDYALWLKSLANGCNGDNIQQVLVDMRFSKETAKRRGGIKYAISEIKAQYHFYRANYISYQDFIINIITRIFVRLLPTSFRGYIYKKVIRRFL.

This sequence belongs to the glycosyltransferase 2 family. The cofactor is Mn(2+).

The protein resides in the cell inner membrane. The enzyme catalyses N-acetyl-alpha-D-glucosaminyl-di-trans,octa-cis-undecaprenyl diphosphate + UDP-alpha-D-galactose = beta-D-Gal-(1-&gt;3)-alpha-D-GlcNAc-di-trans,octa-cis-undecaprenyl diphosphate + UDP + H(+). It participates in bacterial outer membrane biogenesis; LPS O-antigen biosynthesis. Catalyzes the addition of Gal, the second sugar moiety of the O7-antigen repeating unit, to GlcNAc-pyrophosphate-undecaprenol. The polypeptide is UDP-Gal:alpha-D-GlcNAc-diphosphoundecaprenol beta-1,3-galactosyltransferase (wbbD) (Escherichia coli).